The following is a 348-amino-acid chain: Putative transport protein HI_0338 (348 aa).

Transmembrane regions (helical) follow at residues 7-27, 28-48, 60-80, 139-159, 196-216, 223-243, 245-265, 267-287, and 296-316; these read LHRT…VKLA, AEIV…SPII, LAIT…VGLI, VLLN…VVIF, VIGY…GVFI, VQYA…PNIG, IIAA…GIGF, VAIG…PKMM, and LVVF…GMLL.

This sequence belongs to the autoinducer-2 exporter (AI-2E) (TC 2.A.86) family.

The protein resides in the cell membrane. The sequence is that of Putative transport protein HI_0338 from Haemophilus influenzae (strain ATCC 51907 / DSM 11121 / KW20 / Rd).